The following is a 206-amino-acid chain: MKKQKATSQKPKITYRVNEQIRVPEVRIIFPDGTQQVMKTIDARRMAEDRNTDLIEVQPNAEPPVCKFDNLGKLLYKMAQRDKDLKKKQKTTTLKELRFHPNTDKHDFDFKTAHLEEFLRKGNRVRATIVFLGRSIIYKDKGLELADRLTERLSVVGNREGEPKFEGKKLFVYFEPDKKKIDAYERIRSKTGTPLAPLEESADAED.

Belongs to the IF-3 family. As to quaternary structure, monomer.

The protein localises to the cytoplasm. In terms of biological role, IF-3 binds to the 30S ribosomal subunit and shifts the equilibrium between 70S ribosomes and their 50S and 30S subunits in favor of the free subunits, thus enhancing the availability of 30S subunits on which protein synthesis initiation begins. This chain is Translation initiation factor IF-3, found in Chlorobium luteolum (strain DSM 273 / BCRC 81028 / 2530) (Pelodictyon luteolum).